The primary structure comprises 240 residues: Homeobox protein DLX-4 (240 aa).

The disordered stretch occupies residues 80 to 120 (QPLCGPAEHPQELEADSEKPRLSPEPSERRPQAPAKKLRKP). Residues 88 to 110 (HPQELEADSEKPRLSPEPSERRP) are compositionally biased toward basic and acidic residues. Residues 117 to 176 (LRKPRTIYSSLQLQHLNQRFQHTQYLALPERAQLAAQLGLTQTQVKIWFQNKRSKYKKLL) constitute a DNA-binding region (homeobox).

It belongs to the distal-less homeobox family. Expressed in leukemia cells and placenta. Also expressed in kidney and fetal liver.

The protein resides in the nucleus. Its function is as follows. May play a role in determining the production of hemoglobin S. May act as a repressor. During embryonic development, plays a role in palatogenesis. In Homo sapiens (Human), this protein is Homeobox protein DLX-4 (DLX4).